Reading from the N-terminus, the 347-residue chain is MSARLTLLRPDDWHIHLRDGAALPHTVADAARQFARAIIMPNLVPPVRNADEAEAYRQRILAARPAGSRFEPLMVLYLTDSTTPDDIRRAKASGFVHAAKLYPAGATTNSASGVTAIDNIFGVLETMAEVGLPLLVHGEVTRSEIDIFDREKYFIDEQLSRVTARFPTLKVVFEHITTRDAVQFVQAAGANVGATITAHHLLYNRNHMLVGGIRPHLFCLPVLKRNLHQEALLDAATSGSPKFFLGTDSAPHAQHAKEAACGCAGCYTAFAAIELYAEAFEQRQALDKLEPFASHFGPDFYGLPRNTDEITLVRTEWDVPASLPFGEQVVVPLRAGERLHWRLESNA.

Zn(2+)-binding residues include H14 and H16. Residues 16-18 (HLR) and N42 each bind substrate. The Zn(2+) site is built by K100, H137, and H175. K100 carries the N6-carboxylysine modification. H137 lines the substrate pocket. L220 contacts substrate. Residue D248 participates in Zn(2+) binding. D248 is a catalytic residue. Substrate is bound by residues H252 and A264.

Belongs to the metallo-dependent hydrolases superfamily. DHOase family. Class II DHOase subfamily. Homodimer. Zn(2+) serves as cofactor.

It catalyses the reaction (S)-dihydroorotate + H2O = N-carbamoyl-L-aspartate + H(+). It functions in the pathway pyrimidine metabolism; UMP biosynthesis via de novo pathway; (S)-dihydroorotate from bicarbonate: step 3/3. Catalyzes the reversible cyclization of carbamoyl aspartate to dihydroorotate. The sequence is that of Dihydroorotase from Stutzerimonas stutzeri (strain A1501) (Pseudomonas stutzeri).